We begin with the raw amino-acid sequence, 166 residues long: NADPH-dependent 7-cyano-7-deazaguanine reductase (166 aa).

Cys-57 (thioimide intermediate) is an active-site residue. Asp-64 acts as the Proton donor in catalysis. Substrate-binding positions include 79-81 (VES) and 98-99 (HE).

Belongs to the GTP cyclohydrolase I family. QueF type 1 subfamily.

It is found in the cytoplasm. It catalyses the reaction 7-aminomethyl-7-carbaguanine + 2 NADP(+) = 7-cyano-7-deazaguanine + 2 NADPH + 3 H(+). The protein operates within tRNA modification; tRNA-queuosine biosynthesis. Its function is as follows. Catalyzes the NADPH-dependent reduction of 7-cyano-7-deazaguanine (preQ0) to 7-aminomethyl-7-deazaguanine (preQ1). This chain is NADPH-dependent 7-cyano-7-deazaguanine reductase, found in Staphylococcus aureus (strain JH1).